The following is a 301-amino-acid chain: Probable alpha-L-glutamate ligase (301 aa).

An ATP-grasp domain is found at 104 to 287 (LQLLSRKGIG…VAGMIIQYLE (184 aa)). Residues K141, 178–179 (EY), D187, and 211–213 (RSN) contribute to the ATP site. Mg(2+)-binding residues include D248, E260, and N262. Mn(2+) contacts are provided by D248, E260, and N262.

This sequence belongs to the RimK family. The cofactor is Mg(2+). Mn(2+) is required as a cofactor.

This is Probable alpha-L-glutamate ligase from Ectopseudomonas mendocina (strain ymp) (Pseudomonas mendocina).